The chain runs to 513 residues: Protein phosphatase 1H (513 aa).

At Ser-7 the chain carries Phosphoserine. One can recognise a PPM-type phosphatase domain in the interval Ala-77–Leu-506. The segment at Thr-109–Lys-133 is disordered. Thr-113 bears the Phosphothreonine mark. A phosphoserine mark is found at Ser-123 and Ser-210. Omega-N-methylarginine is present on Arg-212. Position 220 is a phosphoserine (Ser-220). Thr-223 carries the post-translational modification Phosphothreonine. The residue at position 421 (Ser-421) is a Phosphoserine.

It belongs to the PP2C family.

It localises to the nucleus. The protein localises to the cytoplasm. It carries out the reaction O-phospho-L-seryl-[protein] + H2O = L-seryl-[protein] + phosphate. The enzyme catalyses O-phospho-L-threonyl-[protein] + H2O = L-threonyl-[protein] + phosphate. In terms of biological role, dephosphorylates CDKN1B at 'Thr-187', thus removing a signal for proteasomal degradation. The protein is Protein phosphatase 1H (Ppm1h) of Mus musculus (Mouse).